Here is a 396-residue protein sequence, read N- to C-terminus: Purine ribonucleoside efflux pump NepI (396 aa).

The Cytoplasmic segment spans residues 1 to 21 (MSEFIAENRGANAITRPNWSA). Residues 22–42 (VFSVAFCVACLIIVEFLPVSL) form a helical membrane-spanning segment. Topologically, residues 43-54 (LTPMAQDLGISE) are periplasmic. The helical transmembrane segment at 55 to 75 (GVAGQSVTVTAFVAMFASLFI) threads the bilayer. At 76–85 (TQTIQATDRR) the chain is on the cytoplasmic side. Residues 86-106 (YVVILFAVLLTLSCLLVSFAN) traverse the membrane as a helical segment. Position 107 (serine 107) is a topological domain, periplasmic. The helical transmembrane segment at 108-128 (FSLLLIGRACLGVALGGFWAI) threads the bilayer. Over 129-147 (SASLTMRLVPPRTVPKALS) the chain is Cytoplasmic. The chain crosses the membrane as a helical span at residues 148–168 (VIFGAVSIALVIAAPLGSFLG). The Periplasmic portion of the chain corresponds to 169–175 (ELIGWRN). The helical transmembrane segment at 176–196 (VFNAAAAMGVLCIFWIIKSLP) threads the bilayer. Topologically, residues 197 to 215 (SLPGEPSHQKQNTFRLLQR) are cytoplasmic. A helical membrane pass occupies residues 216-236 (PGVMAGMIAIFMSFAGQFAFF). The Periplasmic segment spans residues 237–255 (TYIRPVYMNLAGFGVDGLT). The chain crosses the membrane as a helical span at residues 256–276 (LVLLSFGIASFVGTSLSSFIL). The Cytoplasmic segment spans residues 277-281 (KRSVK). Residues 282 to 302 (LALAGAPFVLALSALVLTLWG) traverse the membrane as a helical segment. Residues 303 to 305 (SDK) lie on the Periplasmic side of the membrane. A helical membrane pass occupies residues 306–326 (IVATGVAIIWGLTFALIPVGW). Residues 327-343 (STWITRSLADQAEKAGS) are Cytoplasmic-facing. The chain crosses the membrane as a helical span at residues 344 to 364 (IQVAVIQLANTCGAAIGGYAL). At 365–366 (DN) the chain is on the periplasmic side. Residues 367–387 (IGLTSPLMLSGTLMLLTALLV) traverse the membrane as a helical segment. The Cytoplasmic portion of the chain corresponds to 388 to 396 (TAKVKMKKS).

The protein belongs to the major facilitator superfamily. DHA1 family. NepI (TC 2.A.1.2.26) subfamily.

The protein resides in the cell inner membrane. The catalysed reaction is inosine(in) + H(+)(out) = inosine(out) + H(+)(in). It carries out the reaction guanosine(in) + H(+)(out) = guanosine(out) + H(+)(in). Involved in the efflux of purine ribonucleosides, such as inosine and guanosine. The chain is Purine ribonucleoside efflux pump NepI from Escherichia coli O6:K15:H31 (strain 536 / UPEC).